Here is a 127-residue protein sequence, read N- to C-terminus: uncharacterized protein (127 aa).

The segment at 1-34 (MKNPESSGVSSSPQIQRVSPSSSSTSPSPPSIGT) is disordered. Low complexity predominate over residues 9-34 (VSSSPQIQRVSPSSSSTSPSPPSIGT). The next 2 helical transmembrane spans lie at 47–67 (IAAVVVAVDVVDIMSVDPLAM) and 84–104 (TIAVDSITLLYTPICLCYLLV).

The protein localises to the membrane. This is an uncharacterized protein from Saccharomyces cerevisiae (strain ATCC 204508 / S288c) (Baker's yeast).